The primary structure comprises 42 residues: Lanthionine-containing peptide SapB precursor RamS (42 aa).

The propeptide occupies M1–E21. Residues M1–E21 are disordered. 2 cross-links (lanthionine (Ser-Cys)) span residues S24–C31 and S34–C41. A 2,3-didehydroalanine (Ser) mark is found at S27 and S37.

The protein belongs to the lanthionine-containing morphogen family. In terms of processing, maturation involves the enzymatic conversion of Ser into dehydrated AA and the formation of thioether bonds with cysteine, probably by RamC. This is followed by membrane translocation and cleavage of the modified precursor. The RamS precursor protein (detected by an anti-propeptide antibody and by a C-terminal His-tag) is detected from at least 16 hours post-germination; its apparent molecular weight decreases starting from about 34 hours, when its probable modifying enzyme ramC is transcribed. Surfactin, a B.subtilis cyclic lipopeptide antibiotic which prevents aerial hyphae formation in S.coelicolor, decreases localization of RamS precursor protein to the cell membrane, suggesting that processing only occurs at the cell membrane.

The protein localises to the cell membrane. Its subcellular location is the secreted. The protein resides in the spore wall. Stably accumulated precursor of SapB. Functionally, lanthionine-containing peptide devoid of antibiotic properties. A surface active peptide involved in the efficient formation of aerial mycelium when cells are grown in rich media. Has an overlapping function with the surface-active chaplin proteins; chaplins are essential on minimal medium while on rich medium both chaplins and SapB are required for efficient aerial hyphae formation. Required under conditions of high osmolarity where it may change the physical properties of the chaplin layer to allow hyphae to grow into air. Suggested to self-assemble at air-water interfaces, thus providing a film of surfactant through which nascent aerial hyphae can emerge; the aerial hyphae differentiate further into spores. Application to bald mutants (bld, unable to make aerial hyphae) restores hyphae growth. Application to chaplin negative mutants as well as ramC-ramS-ramA-ramB and ramR deletions also restores aerial hyphae growth and sporulation. Reduces surface tension of water from 72 to 30 mJ/m(2). The sequence is that of Lanthionine-containing peptide SapB precursor RamS (ramS) from Streptomyces coelicolor (strain ATCC BAA-471 / A3(2) / M145).